The primary structure comprises 571 residues: CDT1-like protein a, chloroplastic (571 aa).

Residues 1 to 79 (MSTPGSSRSI…GSRRRSEDPV (79 aa)) constitute a chloroplast transit peptide. Disordered stretches follow at residues 1–110 (MSTP…EKEK) and 288–315 (TTSS…TPAK). Residues 22 to 38 (SPSSKSQTGNPNPSSVA) are compositionally biased toward polar residues. The segment covering 81–96 (SSAKSRLFFDSSSSSP) has biased composition (low complexity). A compositionally biased stretch (polar residues) spans 288–302 (TTSSLAKPTSSQINI). Residues 303 to 315 (APTPTKPTSTPAK) are compositionally biased toward low complexity.

The protein belongs to the Cdt1 family. As to quaternary structure, binds to ARC6. Post-translationally, phosphorylated by cyclin D- and cyclin A-containing CDKA-1, and thus targeted to proteasome-mediated proteolysis. In terms of tissue distribution, expressed in proliferating (e.g. shoot and root apical meristems, organ primordia) and endoreplicating cells (e.g. guard cells and stomatal lineage, developing trichomes).

It localises to the plastid. It is found in the chloroplast. Its function is as follows. Member of the pre-replication complex. Component of the plastid division machinery. Promotes polyloidization and regulates endoreduplication. Involved in the coordination of cell and plastid division. The protein is CDT1-like protein a, chloroplastic (CDT1A) of Arabidopsis thaliana (Mouse-ear cress).